We begin with the raw amino-acid sequence, 275 residues long: Thioredoxin-like 1-1, chloroplastic (275 aa).

The transit peptide at 1–72 (MTEVISKTSL…GDSQDESFRR (72 aa)) directs the protein to the chloroplast. A Thioredoxin domain is found at 73 to 206 (SSAITAQTTL…FRDALAKHGP (134 aa)). Catalysis depends on nucleophile residues Cys-129 and Cys-132. Residues Cys-129 and Cys-132 are joined by a disulfide bond. Positions 238-275 (KPVPVEKEAATPDSNPSLPVPLPSMSSNDEKTLVSAGR) are disordered. Low complexity predominate over residues 249-264 (PDSNPSLPVPLPSMSS).

The protein belongs to the thioredoxin family.

It is found in the plastid. Its subcellular location is the chloroplast. Functionally, thiol-disulfide oxidoreductase that may participate in various redox reactions. Possesses insulin disulfide bonds reducing activity. The sequence is that of Thioredoxin-like 1-1, chloroplastic from Arabidopsis thaliana (Mouse-ear cress).